The primary structure comprises 52 residues: DNA-directed RNA polymerase subunit Rpo12 (52 aa).

3 residues coordinate Zn(2+): cysteine 13, cysteine 30, and cysteine 33.

It belongs to the archaeal Rpo12/eukaryotic RPC10 RNA polymerase subunit family. In terms of assembly, part of the RNA polymerase complex. Zn(2+) serves as cofactor.

The protein resides in the cytoplasm. The enzyme catalyses RNA(n) + a ribonucleoside 5'-triphosphate = RNA(n+1) + diphosphate. Its function is as follows. DNA-dependent RNA polymerase (RNAP) catalyzes the transcription of DNA into RNA using the four ribonucleoside triphosphates as substrates. In Pyrobaculum neutrophilum (strain DSM 2338 / JCM 9278 / NBRC 100436 / V24Sta) (Thermoproteus neutrophilus), this protein is DNA-directed RNA polymerase subunit Rpo12.